Reading from the N-terminus, the 295-residue chain is Polyprenyl transferase dpmaC (295 aa).

8 consecutive transmembrane segments (helical) span residues 39–59, 84–104, 109–124, 131–151, 168–188, 213–233, 237–257, and 271–291; these read LFCV…NDWI, QAFV…HVML, VHVI…YPFL, KLHI…AIPG, YCLP…TAYS, LVLV…LTQF, WLWV…LALF, and SNFV…LLKA.

It belongs to the UbiA prenyltransferase family. Mg(2+) is required as a cofactor.

The protein localises to the membrane. Its pathway is secondary metabolite biosynthesis; terpenoid biosynthesis. Functionally, polyprenyl transferase; part of the gene cluster that mediates the biosynthesis of the diterpenoid pyrones subglutinols A and B. The first step of the pathway is the synthesis of the alpha-pyrone moiety by the polyketide synthase dpmaA via condensation of one acetyl-CoA starter unit with 3 malonyl-CoA units and 2 methylations. The alpha-pyrone is then combined with geranylgeranyl pyrophosphate (GGPP) formed by the GGPP synthase dpmaD through the action of the prenyltransferase dpmaC to yield a linear alpha-pyrone diterpenoid. Subsequent steps in the diterpenoid pyrone biosynthetic pathway involve the decalin core formation, which is initiated by the epoxidation of the C10-C11 olefin by the FAD-dependent oxidoreductase dpmaE, and is followed by a cyclization cascade catalyzed by the terpene cyclase dpmaB. The dehydrogenase dpmaF is then involved in tetrahydrofuran (THF) ring formation at the C5 unit to complete the formation of subglutinols A and B. This chain is Polyprenyl transferase dpmaC, found in Metarhizium anisopliae (Entomophthora anisopliae).